The primary structure comprises 494 residues: Amidophosphoribosyltransferase (494 aa).

A propeptide spanning residues Met1–Glu10 is cleaved from the precursor. The active-site Nucleophile is Cys11. Residues Cys11 to Glu231 form the Glutamine amidotransferase type-2 domain. Positions 294, 356, and 357 each coordinate Mg(2+).

It in the C-terminal section; belongs to the purine/pyrimidine phosphoribosyltransferase family. Requires Mg(2+) as cofactor.

It catalyses the reaction 5-phospho-beta-D-ribosylamine + L-glutamate + diphosphate = 5-phospho-alpha-D-ribose 1-diphosphate + L-glutamine + H2O. It functions in the pathway purine metabolism; IMP biosynthesis via de novo pathway; N(1)-(5-phospho-D-ribosyl)glycinamide from 5-phospho-alpha-D-ribose 1-diphosphate: step 1/2. Its function is as follows. Catalyzes the formation of phosphoribosylamine from phosphoribosylpyrophosphate (PRPP) and glutamine. This Staphylococcus epidermidis (strain ATCC 35984 / DSM 28319 / BCRC 17069 / CCUG 31568 / BM 3577 / RP62A) protein is Amidophosphoribosyltransferase.